The following is a 156-amino-acid chain: Myosin regulatory light chain, striated adductor muscle (156 aa).

The residue at position 1 (A1) is a Blocked amino end (Ala). EF-hand domains lie at 15–50 (KQIQ…LGRT) and 84–119 (DTEE…MGDN). Ca(2+)-binding residues include D28, D30, D32, and D39.

In terms of biological role, in molluscan muscle, calcium regulation is associated with myosin rather than with actin. Muscle myosin contains two types of light chains: the catalytic light chain, essential for ATPase activity, and the regulatory light chain, a calcium-binding protein responsible for Ca(2+) dependent binding and Ca(2+) dependent Mg-ATPase activity. The protein is Myosin regulatory light chain, striated adductor muscle of Mizuhopecten yessoensis (Japanese scallop).